The sequence spans 447 residues: Trigger factor (447 aa).

Residues 174 to 261 (GDIAVLGFKG…LKDLKTRELP (88 aa)) form the PPIase FKBP-type domain.

This sequence belongs to the FKBP-type PPIase family. Tig subfamily.

Its subcellular location is the cytoplasm. The catalysed reaction is [protein]-peptidylproline (omega=180) = [protein]-peptidylproline (omega=0). In terms of biological role, involved in protein export. Acts as a chaperone by maintaining the newly synthesized protein in an open conformation. Functions as a peptidyl-prolyl cis-trans isomerase. This Synechococcus sp. (strain CC9902) protein is Trigger factor.